The sequence spans 268 residues: Small ribosomal subunit protein uS3 (268 aa).

One can recognise a KH type-2 domain in the interval 40-110 (IRNLFFINYR…KLDLTINEIG (71 aa)).

This sequence belongs to the universal ribosomal protein uS3 family. In terms of assembly, part of the 30S ribosomal subunit. Forms a tight complex with proteins S10 and S14.

Binds the lower part of the 30S subunit head. Binds mRNA in the 70S ribosome, positioning it for translation. The sequence is that of Small ribosomal subunit protein uS3 from Mycoplasma genitalium (strain ATCC 33530 / DSM 19775 / NCTC 10195 / G37) (Mycoplasmoides genitalium).